A 227-amino-acid chain; its full sequence is Agamous-like MADS-box protein AGL17 (227 aa).

An MADS-box domain is found at 3–57; that stretch reads RGKIVIQKIDDSTSRQVTFSKRRKGLIKKAKELAILCDAEVCLIIFSNTDKLYDF. Residues 86 to 176 enclose the K-box domain; the sequence is VKFWQREAET…SRKVQRIHQE (91 aa).

Preferentially expressed in roots.

Its subcellular location is the nucleus. Its function is as follows. Probable transcription factor. This Arabidopsis thaliana (Mouse-ear cress) protein is Agamous-like MADS-box protein AGL17 (AGL17).